A 425-amino-acid polypeptide reads, in one-letter code: Histidine--tRNA ligase (425 aa).

It belongs to the class-II aminoacyl-tRNA synthetase family. As to quaternary structure, homodimer.

The protein resides in the cytoplasm. It carries out the reaction tRNA(His) + L-histidine + ATP = L-histidyl-tRNA(His) + AMP + diphosphate + H(+). The sequence is that of Histidine--tRNA ligase from Streptomyces coelicolor (strain ATCC BAA-471 / A3(2) / M145).